The sequence spans 396 residues: Argininosuccinate synthase (396 aa).

ATP-binding positions include 10 to 18 (AYSGGLDTS) and Ala-37. L-citrulline-binding residues include Tyr-88 and Ser-93. Gly-118 contacts ATP. Residues Thr-120, Asn-124, and Asp-125 each contribute to the L-aspartate site. Asn-124 contributes to the L-citrulline binding site. L-citrulline-binding residues include Arg-128, Ser-176, Ser-185, Glu-261, and Tyr-273.

It belongs to the argininosuccinate synthase family. Type 1 subfamily. In terms of assembly, homotetramer.

The protein resides in the cytoplasm. The catalysed reaction is L-citrulline + L-aspartate + ATP = 2-(N(omega)-L-arginino)succinate + AMP + diphosphate + H(+). Its pathway is amino-acid biosynthesis; L-arginine biosynthesis; L-arginine from L-ornithine and carbamoyl phosphate: step 2/3. The protein is Argininosuccinate synthase of Nitratidesulfovibrio vulgaris (strain DP4) (Desulfovibrio vulgaris).